We begin with the raw amino-acid sequence, 441 residues long: Histidine--tRNA ligase (441 aa).

It belongs to the class-II aminoacyl-tRNA synthetase family. In terms of assembly, homodimer.

Its subcellular location is the cytoplasm. The enzyme catalyses tRNA(His) + L-histidine + ATP = L-histidyl-tRNA(His) + AMP + diphosphate + H(+). This chain is Histidine--tRNA ligase, found in Koribacter versatilis (strain Ellin345).